A 238-amino-acid polypeptide reads, in one-letter code: Protein A47 (238 aa).

This sequence belongs to the orthopoxvirus A47 protein family.

This Vaccinia virus (strain Ankara) (VACV) protein is Protein A47.